The primary structure comprises 610 residues: MIQVLLVTISLAVFPYQGSSVILESGNVNDYEVVYPRKVTALPKGAVQPKYEDAMQYEFKVNGEPVVLHLEKNKGLFSEDYSETHYSPDGREITTYPPVEDHCYYHGRIENDADSTASISACNGLKGHFKLQGEMYLIEPLKLPDSEAHAVFKYENVEKEDEAPKMCGVTQNWESYEPIKKASQSNLTPEQQRYLNAKKYVKLFLVADYIMYLKYGRNLTAVRTRMYDIVNVITPIYHRMNIHVALVGLEIWSNTDKIIVQSSADVTLDLFAKWRATDLLSRKSHDNAQLLTGINFNGPTAGLGYLGGICNTMYSAGIVQDHSKIHHLVAIAMAHEMGHNLGMDHDKDTCTCGTRPCVMAGALSCEASFLFSDCSQKDHREFLIKNMPQCILKKPLKTDVVSPAVCGNYFVEVGEECDCGSPRTCRDPCCDATTCKLRQGAQCAEGLCCDQCRFKGAGTECRAAKDECDMADVCTGRSAECTDRFQRNGQPCKNNNGYCYNGKCPIMADQCIALFGPGATVSQDACFQFNREGNHYGYCRKEQNTKIACEPQDVKCGRLYCFPNSPENKNPCNIYYSPNDEDKGMVLPGTKCADRKACSNGQCVDVTTPY.

The signal sequence occupies residues 1 to 20 (MIQVLLVTISLAVFPYQGSS). The propeptide occupies 21–189 (VILESGNVND…KKASQSNLTP (169 aa)). Glu-190 bears the Pyrrolidone carboxylic acid (Glu) mark. The 197-residue stretch at 199–395 (KYVKLFLVAD…NMPQCILKKP (197 aa)) folds into the Peptidase M12B domain. A glycan (N-linked (GlcNAc...) asparagine) is linked at Asn-218. Intrachain disulfides connect Cys-310–Cys-390, Cys-350–Cys-374, and Cys-352–Cys-357. His-335 is a Zn(2+) binding site. The Metal-binding motif lies at 335–346 (HEMGHNLGMDHD). Glu-336 serves as the catalytic Proton acceptor. The Zn(2+) site is built by His-339 and His-345. The Disintegrin domain occupies 403 to 488 (PAVCGNYFVE…AECTDRFQRN (86 aa)). Ca(2+) contacts are provided by Val-405, Asn-408, Phe-410, Glu-412, Glu-415, and Asp-418. Cystine bridges form between Cys-406–Cys-435, Cys-417–Cys-430, Cys-419–Cys-425, Cys-429–Cys-452, Cys-443–Cys-449, Cys-448–Cys-474, Cys-461–Cys-481, Cys-468–Cys-499, Cys-492–Cys-504, Cys-511–Cys-561, Cys-526–Cys-572, Cys-539–Cys-549, Cys-556–Cys-598, and Cys-592–Cys-603. The D/ECD-tripeptide signature appears at 467–469 (ECD). Residues Asp-469, Met-470, Asp-472, Asp-483, and Arg-484 each contribute to the Ca(2+) site.

This sequence belongs to the venom metalloproteinase (M12B) family. P-III subfamily. P-IIIc sub-subfamily. In terms of assembly, homodimer; disulfide-linked. The cofactor is Zn(2+). In terms of processing, the N-terminus is blocked. As to expression, expressed by the venom gland.

The protein localises to the secreted. Inhibited by EDTA and EGTA, but not by PMSF. Zinc metalloprotease that has fibrinogenolytic and hemorrhagic activities. It induces apoptosis in vascular endothelial cells (VEC), without degrading extracellular matrix (it cannot cleave collagen) or inhibiting adhesion of VEC. VAP1-induced apoptosis is inhibited by antibodies for integrin alpha-3, alpha-6, beta-1 and CD9. Apoptosis is accompanied by severe cell fragmentation, which is controlled by caspases. In Crotalus atrox (Western diamondback rattlesnake), this protein is Zinc metalloproteinase-disintegrin-like VAP1.